A 317-amino-acid polypeptide reads, in one-letter code: Zinc transporter ZIP3 (317 aa).

The Extracellular portion of the chain corresponds to 1 to 3 (MSQ). A helical membrane pass occupies residues 4–24 (LLVAKVLCMVGVFFFMLLGSL). Residues 25 to 42 (LPVKVIEADFEKAHRSKK) are Cytoplasmic-facing. The chain crosses the membrane as a helical span at residues 43-63 (VLSLCNTFGGGVFLATCFNAL). Residues 64 to 85 (LPAVRDKLQQVLSLGHISTDYP) lie on the Extracellular side of the membrane. A helical membrane pass occupies residues 86–106 (LAETLMMVGFFLTVFVEQLVL). Residues 107–172 (TFRRERPPFI…RELGRPGPLR (66 aa)) are Cytoplasmic-facing. 2 positions are modified to phosphoserine: S125 and S129. The helical transmembrane segment at 173 to 193 (LLSLVFALSAHSVFEGLALGL) threads the bilayer. Topologically, residues 194–199 (QEEGER) are extracellular. Residues 200 to 220 (VVSLFVGVAVHETLVAVALGI) form a helical membrane-spanning segment. Over 221–232 (SMARSAVPLRDA) the chain is Cytoplasmic. A helical membrane pass occupies residues 233-253 (AKLAVTVSAMIPVGIGLGLGI). Residues 254–265 (ESARSVASSVAS) are Extracellular-facing. Residues 266–286 (ALLQGLAGGTFLFVTFLEILA) traverse the membrane as a helical segment. Residues 287–294 (KELEERSE) lie on the Cytoplasmic side of the membrane. A helical membrane pass occupies residues 295-315 (QLLKVLFLVLGYAVLAGMVFL). The Extracellular portion of the chain corresponds to 316 to 317 (KW).

Belongs to the ZIP transporter (TC 2.A.5) family.

It localises to the cell membrane. The protein resides in the apical cell membrane. It carries out the reaction Zn(2+)(in) = Zn(2+)(out). In terms of biological role, transporter for the divalent cation Zn(2+). Mediates the influx of Zn(2+) into cells from extracellular space. Controls Zn(2+) accumulation into dentate gyrus granule cells in the hippocampus. Mediates Zn(2+) reuptake from the secreted milk within the alveolar lumen. This Rattus norvegicus (Rat) protein is Zinc transporter ZIP3 (Slc39a3).